The following is a 486-amino-acid chain: ATP synthase subunit beta (486 aa).

An ATP-binding site is contributed by glycine 164–threonine 171.

This sequence belongs to the ATPase alpha/beta chains family. In terms of assembly, F-type ATPases have 2 components, CF(1) - the catalytic core - and CF(0) - the membrane proton channel. CF(1) has five subunits: alpha(3), beta(3), gamma(1), delta(1), epsilon(1). CF(0) has four main subunits: a(1), b(1), b'(1) and c(9-12).

The protein localises to the cellular thylakoid membrane. The enzyme catalyses ATP + H2O + 4 H(+)(in) = ADP + phosphate + 5 H(+)(out). Functionally, produces ATP from ADP in the presence of a proton gradient across the membrane. The catalytic sites are hosted primarily by the beta subunits. This is ATP synthase subunit beta from Prochlorococcus marinus subsp. pastoris (strain CCMP1986 / NIES-2087 / MED4).